Reading from the N-terminus, the 455-residue chain is Epoxide hydrolase 1 (455 aa).

A helical; Signal-anchor for type III membrane protein transmembrane segment spans residues 1–21 (MWLELILASVLGFVIYWFVSR). Residues 22–455 (DKEETLPLED…RKFVSLAELQ (434 aa)) are Cytoplasmic-facing. Residue Asp-226 is the Nucleophile of the active site. A Dimethylated arginine modification is found at Arg-295. Tyr-374 (proton donor) is an active-site residue. The Proton acceptor role is filled by His-431. The residue at position 439 (Lys-439) is an N6-acetyllysine.

This sequence belongs to the peptidase S33 family.

The protein resides in the microsome membrane. Its subcellular location is the endoplasmic reticulum membrane. It carries out the reaction cis-stilbene oxide + H2O = (1R,2R)-hydrobenzoin. It catalyses the reaction 1-(4-methoxyphenyl)-N-methyl-N-[(3-methyloxetan-3-yl)methyl]methanamine + H2O = 2-{[(4-methoxybenzyl)(methyl)amino]methyl}-2-methylpropane-1,3-diol. The catalysed reaction is 8,9-epoxy-(5Z,11Z,14Z)-eicosatrienoate + H2O = 8,9-dihydroxy-(5Z,11Z,14Z)-eicosatrienoate. The enzyme catalyses 11,12-epoxy-(5Z,8Z,14Z)-eicosatrienoate + H2O = 11,12-dihydroxy-(5Z,8Z,14Z)-eicosatrienoate. It carries out the reaction 2-(5Z,8Z,11Z,14Z-eicosatetraenoyl)-glycerol + H2O = glycerol + (5Z,8Z,11Z,14Z)-eicosatetraenoate + H(+). Inhibited by 10-hydroxystearamide and methoxy-arachidonyl fluorophosphate. Its function is as follows. Biotransformation enzyme that catalyzes the hydrolysis of arene and aliphatic epoxides to less reactive and more water soluble dihydrodiols by the trans addition of water. May play a role in the metabolism of endogenous lipids such as epoxide-containing fatty acids. Metabolizes the abundant endocannabinoid 2-arachidonoylglycerol (2-AG) to free arachidonic acid (AA) and glycerol. Binds 20(S)-hydroxycholesterol (20(S)-OHC). This is Epoxide hydrolase 1 from Mus musculus (Mouse).